The sequence spans 437 residues: Aspartate aminotransferase, mitochondrial (437 aa).

L-aspartate-binding residues include G72, W167, and N220. K284 carries the N6-(pyridoxal phosphate)lysine modification. R413 provides a ligand contact to L-aspartate.

The protein belongs to the class-I pyridoxal-phosphate-dependent aminotransferase family. As to quaternary structure, homodimer. Requires pyridoxal 5'-phosphate as cofactor.

It localises to the mitochondrion matrix. The enzyme catalyses L-aspartate + 2-oxoglutarate = oxaloacetate + L-glutamate. Functionally, plays a key role in amino acid metabolism. Important for metabolite exchange between mitochondria and cytosol. The chain is Aspartate aminotransferase, mitochondrial from Schizosaccharomyces pombe (strain 972 / ATCC 24843) (Fission yeast).